The sequence spans 729 residues: Cytoplasmic polyadenylation element-binding protein 4 (729 aa).

Disordered stretches follow at residues 20–49 (FPVR…NNNT) and 78–133 (EKAK…KEKI). Residues 24 to 35 (FHPHLQPPHHHQ) are compositionally biased toward basic residues. Positions 83-96 (QQQEQQDPLEKQQL) are enriched in low complexity. A phosphoserine mark is found at Ser-97, Ser-99, and Ser-137. Positions 218–328 (FGGSFSPQIG…RGLNGGITPL (111 aa)) are disordered. A compositionally biased stretch (basic residues) spans 232 to 249 (HHPHHPHFQHHHSQHQQQ). Phosphoserine occurs at positions 252 and 255. The span at 285-300 (WSSYQSPSPTPSSSWS) shows a compositional bias: low complexity. A compositionally biased stretch (gly residues) spans 301 to 313 (PGGGGYGGWGGSQ). Position 326 is a phosphothreonine (Thr-326). A phosphoserine mark is found at Ser-330 and Ser-332. RRM domains are found at residues 472–563 (RKVF…PWNL) and 580–662 (KTIF…PYVL). The RNA-binding stretch occupies residues 541-543 (KLY). Zn(2+) is bound by residues Cys-667, Cys-675, Cys-684, Cys-689, Cys-694, Cys-697, His-702, and His-710.

The protein belongs to the RRM CPEB family. As to quaternary structure, interacts with TOB1. In terms of tissue distribution, expressed in pancreas in islets and ductal cells (at protein level). Expressed in melanocytes.

Its subcellular location is the cytoplasm. The protein localises to the cell projection. The protein resides in the dendrite. It localises to the dendritic spine. It is found in the postsynaptic density. Its subcellular location is the axon. The protein localises to the growth cone. The protein resides in the endoplasmic reticulum. It localises to the perinuclear region. Functionally, sequence-specific RNA-binding protein that binds to the cytoplasmic polyadenylation element (CPE), an uridine-rich sequence element (consensus sequence 5'-UUUUUAU-3') within the mRNA 3'-UTR. RNA binding results in a clear conformational change analogous to the Venus fly trap mechanism. Regulates activation of unfolded protein response (UPR) in the process of adaptation to ER stress in liver, by maintaining translation of CPE-regulated mRNAs in conditions in which global protein synthesis is inhibited. Required for cell cycle progression, specifically for cytokinesis and chromosomal segregation. Plays a role as an oncogene promoting tumor growth and progression by positively regulating translation of t-plasminogen activator/PLAT. Stimulates proliferation of melanocytes. In contrast to CPEB1 and CPEB3, does not play role in synaptic plasticity, learning and memory. This Homo sapiens (Human) protein is Cytoplasmic polyadenylation element-binding protein 4 (CPEB4).